Here is a 214-residue protein sequence, read N- to C-terminus: Cytochrome b (214 aa).

Transmembrane regions (helical) follow at residues 31-51, 75-96, 111-131, and 176-196; these read FGSM…FLAF, WIMQ…YIHI, WVSG…GYVL, and FFAL…IHIL. The heme b site is built by H81 and H95. 2 residues coordinate heme b: H180 and H194. H199 contacts a ubiquinone.

The protein belongs to the cytochrome b family. The cytochrome bc1 complex contains 3 respiratory subunits (MT-CYB, CYC1 and UQCRFS1), 2 core proteins (UQCRC1 and UQCRC2) and probably 6 low-molecular weight proteins. The cofactor is heme b.

Its subcellular location is the mitochondrion inner membrane. Component of the ubiquinol-cytochrome c reductase complex (complex III or cytochrome b-c1 complex) that is part of the mitochondrial respiratory chain. The b-c1 complex mediates electron transfer from ubiquinol to cytochrome c. Contributes to the generation of a proton gradient across the mitochondrial membrane that is then used for ATP synthesis. In Gloydius blomhoffii (Mamushi), this protein is Cytochrome b (MT-CYB).